A 92-amino-acid polypeptide reads, in one-letter code: Small ribosomal subunit protein uS19 (92 aa).

The protein belongs to the universal ribosomal protein uS19 family.

Functionally, protein S19 forms a complex with S13 that binds strongly to the 16S ribosomal RNA. This is Small ribosomal subunit protein uS19 from Paracoccus denitrificans (strain Pd 1222).